The sequence spans 291 residues: Small ribosomal subunit biogenesis GTPase RsgA (291 aa).

The CP-type G domain occupies 63 to 221; the sequence is KNEIKRPPVS…IADTPGFSAL (159 aa). GTP is bound by residues 112-115 and 164-172; these read TKKD and GQSGVGKST. Positions 245, 250, 252, and 258 each coordinate Zn(2+).

Belongs to the TRAFAC class YlqF/YawG GTPase family. RsgA subfamily. Monomer. Associates with 30S ribosomal subunit, binds 16S rRNA. It depends on Zn(2+) as a cofactor.

It is found in the cytoplasm. Its function is as follows. One of several proteins that assist in the late maturation steps of the functional core of the 30S ribosomal subunit. Helps release RbfA from mature subunits. May play a role in the assembly of ribosomal proteins into the subunit. Circularly permuted GTPase that catalyzes slow GTP hydrolysis, GTPase activity is stimulated by the 30S ribosomal subunit. The chain is Small ribosomal subunit biogenesis GTPase RsgA from Staphylococcus saprophyticus subsp. saprophyticus (strain ATCC 15305 / DSM 20229 / NCIMB 8711 / NCTC 7292 / S-41).